The chain runs to 368 residues: Probable endopolygalacturonase A (368 aa).

An N-terminal signal peptide occupies residues 1 to 18 (MRSVELLSLAALGSLVAA). The propeptide occupies 19–31 (APAPSRVSDLTKR). Cysteine 35 and cysteine 50 are disulfide-bonded. PbH1 repeat units lie at residues 140 to 162 (LEDSTITGLSIKNTPVQAISVQA), 167 to 192 (LIDITIDNSDGDDNGGHNTDGFDISE), 193 to 214 (STGVYIRGATVKNQDDCIAINS), 215 to 235 (GENIEFSGGTCSGGHGLSIGS), 244 to 265 (VKNVTITDSTVTDSANGVRIKT), 273 to 295 (VSEVTYSNIKLSGITDYGIVIEQ), and 307 to 352 (TTGV…DITG). Residue aspartate 207 is the Proton donor of the active site. A disulfide bridge connects residues cysteine 209 and cysteine 225. Histidine 229 is a catalytic residue. A glycan (N-linked (GlcNAc...) asparagine) is linked at asparagine 246. Intrachain disulfides connect cysteine 335-cysteine 340 and cysteine 359-cysteine 368.

The protein belongs to the glycosyl hydrolase 28 family.

It localises to the secreted. It catalyses the reaction (1,4-alpha-D-galacturonosyl)n+m + H2O = (1,4-alpha-D-galacturonosyl)n + (1,4-alpha-D-galacturonosyl)m.. Functionally, involved in maceration and soft-rotting of plant tissue. Hydrolyzes the 1,4-alpha glycosidic bonds of de-esterified pectate in the smooth region of the plant cell wall. This Neosartorya fischeri (strain ATCC 1020 / DSM 3700 / CBS 544.65 / FGSC A1164 / JCM 1740 / NRRL 181 / WB 181) (Aspergillus fischerianus) protein is Probable endopolygalacturonase A (pgaA).